Consider the following 1342-residue polypeptide: MAYSYFEKKRIRKDFGKSVQVMEYPFLLSIQLDSFRKFIDTDPTGETGLEAAFRSIFPIKAYSGSSELQYVSYRLGEPLFDVKECQIRGVTYSAPLRVKLRLVVYDKEAAAGTVKDIKEQEVYMGEIPLMTDNGTFVINGTERVIVSQLHRSPGVFFDHDKGKTHSSGKVLYNARVIPYRGSWLDFEFDPKDNLFVRIDRRRKLPASIILRALEYSTEEILAMFYDTTDYTIKGDKLIMDLIPERLRGETAIFDISIKKGEVLVESGRRITARHIRALSKAKLEKLEVPADYIVGRVLSKAYIDKSTGEVIAEANAIITLELLAELSQAGHKVLSTLYMNEFDVGSYMSDTLRVDSSTNKLEALVEVYRMMRPGEPPTKDAAEGLFSNLFFASERYDLSTVGRMKFNRRVGNADDVGTGILSKEDIISVMKTLIGIRDGKGEVDDIDHLGNRRIRSVGEMAENQFRVGLVRVERAVRERLSLGDLDAIMPQDLINAKPISAAVKEFFGSSQLSQFMDQNNPLSEVTHKRRISALGPGGLTRERAGFEVRDVHPTHYGRVCPIETPEGPNIGLINSLSCYARTNDFGFLETPYRKVIDGLVTDEIDYLSAIEEGNFVIAQANAERNDSNKLVQDLVNCRHRNEFILKASAEVQYMDVSPQQIISVAASLIPFLEHDDANRALMGSNMQRQAVPTLRVDKPLVGTGMEKVVAVDSGVTAVAKRGGVVSYVDASRIVVKVNENEMHAGEAGIDIYNLTKYTRSNQNTCINQRPVCRMGEPVVRGDVLADGPSTDMGELALGQNMRIAFMPWNGYNFEDSMLLSERVAIEDRFTTIHIQELTCIARDTKLGSEEITADIPNVGESALSKLDEAGVVYIGAEVNGGDILVGKVTPKGETQLTPEEKLLRAIFGEKAADVKDSSLRVPNSVKGTIIDVQIFTRDGVEKDARAVEIEQMQLKEVKKDLGDELSILEDGIYARTKKLLLSAGLNESDLTSMSRDKWLTQNLADEGQQAELEQIAEQFDNIKEDFDKKFEVKRRKITQGDDLQPGVLKIVKVYLAVKRHIQPGDKMAGRHGNKGVISNVVPVEDMPYDQFGVPVDIVLNPLGVPSRMNIGQILETHLGMACRGIGEKINRMLEAQQEIHKLRNFIQEVYNVGESRQVVDVASFSDDEVLRLAGNLRAGLPIATPAFDGAAEKEIKELFVLADMPQSGQFVLTDGRTGREFERPVTVGYMYMLKLNHLVDDKMHARSTGSYSLVTQQPLGGKAQFGGQRFGEMEVWALEAYGAAYTLQEMLTVKSDDVNGRTKMYKNLVDGDHRMEPGIPESFNVLLKEIRSLGINIELDKD.

Belongs to the RNA polymerase beta chain family. In terms of assembly, the RNAP catalytic core consists of 2 alpha, 1 beta, 1 beta' and 1 omega subunit. When a sigma factor is associated with the core the holoenzyme is formed, which can initiate transcription.

It carries out the reaction RNA(n) + a ribonucleoside 5'-triphosphate = RNA(n+1) + diphosphate. Its function is as follows. DNA-dependent RNA polymerase catalyzes the transcription of DNA into RNA using the four ribonucleoside triphosphates as substrates. The sequence is that of DNA-directed RNA polymerase subunit beta from Colwellia psychrerythraea (strain 34H / ATCC BAA-681) (Vibrio psychroerythus).